The primary structure comprises 389 residues: Large envelope protein (389 aa).

Met1 is modified (N-acetylmethionine). Gly2 carries the N-myristoyl glycine; by host lipid modification. The pre-S1 stretch occupies residues 2–108 (GTNLSVPNPL…PPLRDSHPQA (107 aa)). The pre-S stretch occupies residues 2–163 (GTNLSVPNPL…SARTGDPVTI (162 aa)). Residues 2–170 (GTNLSVPNPL…VTIMENITSG (169 aa)) lie on the Virion surface; in external conformation side of the membrane. Topologically, residues 2-242 (GTNLSVPNPL…PGYRWMCLRR (241 aa)) are intravirion; in internal conformation. The span at 77–95 (VSTIPPPASTNRQSGRQPT) shows a compositional bias: polar residues. A disordered region spans residues 77-103 (VSTIPPPASTNRQSGRQPTPISPPLRD). A pre-S2 region spans residues 109 to 163 (MQWNSTALHQALQDPRVRGLYLPAGGSSSGTVNPAPNIASHISSISARTGDPVTI). The chain crosses the membrane as a helical span at residues 171-191 (FLGPLLVLQAGFFLLTRILTI). Topologically, residues 192–242 (PQSLDSWWTSLNFLGGSPVCLGQNSQSPTSNHSPTSCPPICPGYRWMCLRR) are intravirion; in external conformation. Residues 243-263 (FIIFLFILLLCLIFLLVLLDY) form a helical membrane-spanning segment. Topologically, residues 264–337 (QGMLPVCPLI…WASVRFSWLS (74 aa)) are virion surface. The N-linked (GlcNAc...) asparagine; by host glycan is linked to Asn309. A helical transmembrane segment spans residues 338–358 (LLVPFVQWFVGLSPTVWLSAI). The Intravirion segment spans residues 359-364 (WMMWYW). The chain crosses the membrane as a helical span at residues 365 to 387 (GPSLYSIVSPFIPLLPIFFCLWV). At 388 to 389 (YI) the chain is on the virion surface side.

Belongs to the orthohepadnavirus major surface antigen family. In terms of assembly, in its internal form (Li-HBsAg), interacts with the capsid protein and with the isoform S. Interacts with host chaperone CANX. As to quaternary structure, associates with host chaperone CANX through its pre-S2 N glycan; this association may be essential for isoform M proper secretion. Interacts with isoform L. Interacts with the antigens of satellite virus HDV (HDVAgs); this interaction is required for encapsidation of HDV genomic RNA. Post-translationally, isoform M is N-terminally acetylated by host at a ratio of 90%, and N-glycosylated by host at the pre-S2 region. In terms of processing, myristoylated.

It is found in the virion membrane. Its function is as follows. The large envelope protein exists in two topological conformations, one which is termed 'external' or Le-HBsAg and the other 'internal' or Li-HBsAg. In its external conformation the protein attaches the virus to cell receptors and thereby initiating infection. This interaction determines the species specificity and liver tropism. This attachment induces virion internalization predominantly through caveolin-mediated endocytosis. The large envelope protein also assures fusion between virion membrane and endosomal membrane. In its internal conformation the protein plays a role in virion morphogenesis and mediates the contact with the nucleocapsid like a matrix protein. The middle envelope protein plays an important role in the budding of the virion. It is involved in the induction of budding in a nucleocapsid independent way. In this process the majority of envelope proteins bud to form subviral lipoprotein particles of 22 nm of diameter that do not contain a nucleocapsid. The sequence is that of Large envelope protein from Hepatitis B virus genotype A2 subtype adw (isolate Japan/Nishioka/1983) (HBV-A).